The primary structure comprises 642 residues: Wall-associated receptor kinase-like 6 (642 aa).

A signal peptide spans 1 to 28 (MKKTKTYQVFCIAALSVLTLQLINGSSA). Residues 29–357 (ATPPPPNSNS…PKITKPEKAS (329 aa)) lie on the Extracellular side of the membrane. Asparagine 37, asparagine 72, asparagine 95, asparagine 137, asparagine 216, asparagine 240, and asparagine 276 each carry an N-linked (GlcNAc...) asparagine glycan. Residues 289–346 (CSCEYDYFSGMSYRICYCNYGYTGNPYLRHGCIDIDECEGHHNCGEGTCVNMPGTHSC) are atypical EGF-like. Cystine bridges form between cysteine 291–cysteine 304, cysteine 326–cysteine 337, and cysteine 332–cysteine 346. The chain crosses the membrane as a helical span at residues 358–378 (VLQGVLISLGVLLFVLGILGL). Topologically, residues 379–642 (YKFIKKRTRI…KPLSRKRIGN (264 aa)) are cytoplasmic. The region spanning 432–642 (FSMNRVLGQG…KPLSRKRIGN (211 aa)) is the Protein kinase domain. ATP-binding positions include 438–446 (LGQGGQGTV) and lysine 460. Position 505 is a phosphotyrosine (tyrosine 505). The active-site Proton acceptor is the aspartate 559. Threonine 593 and threonine 598 each carry phosphothreonine. The residue at position 606 (tyrosine 606) is a Phosphotyrosine.

Belongs to the protein kinase superfamily. Ser/Thr protein kinase family. In terms of tissue distribution, slightly expressed in the whole plant.

The protein resides in the membrane. It catalyses the reaction L-seryl-[protein] + ATP = O-phospho-L-seryl-[protein] + ADP + H(+). It carries out the reaction L-threonyl-[protein] + ATP = O-phospho-L-threonyl-[protein] + ADP + H(+). In terms of biological role, serine/threonine-protein kinase that may function as a signaling receptor of extracellular matrix component. This Arabidopsis thaliana (Mouse-ear cress) protein is Wall-associated receptor kinase-like 6 (WAKL6).